We begin with the raw amino-acid sequence, 183 residues long: Small ribosomal subunit protein uS4c (183 aa).

Residues Met-82–Asn-143 enclose the S4 RNA-binding domain.

It belongs to the universal ribosomal protein uS4 family. As to quaternary structure, part of the 30S ribosomal subunit. Contacts protein S5. The interaction surface between S4 and S5 is involved in control of translational fidelity.

The protein resides in the plastid. The protein localises to the chloroplast. One of the primary rRNA binding proteins, it binds directly to 16S rRNA where it nucleates assembly of the body of the 30S subunit. Functionally, with S5 and S12 plays an important role in translational accuracy. This is Small ribosomal subunit protein uS4c (rps4) from Sparaxis sp. (strain Lejeune 1997).